A 273-amino-acid polypeptide reads, in one-letter code: Glutamate 5-kinase (273 aa).

K15 is an ATP binding site. 3 residues coordinate substrate: S55, D142, and N158. ATP contacts are provided by residues 178 to 179 (SD) and 220 to 226 (TGGMLSK).

The protein belongs to the glutamate 5-kinase family.

It localises to the cytoplasm. The catalysed reaction is L-glutamate + ATP = L-glutamyl 5-phosphate + ADP. It functions in the pathway amino-acid biosynthesis; L-proline biosynthesis; L-glutamate 5-semialdehyde from L-glutamate: step 1/2. Catalyzes the transfer of a phosphate group to glutamate to form L-glutamate 5-phosphate. In Streptococcus pyogenes serotype M2 (strain MGAS10270), this protein is Glutamate 5-kinase.